We begin with the raw amino-acid sequence, 761 residues long: Centrosomal protein of 85 kDa (761 aa).

2 disordered regions span residues 1–33 and 95–117; these read MAMQEKYPNDRSHATSPGSNVIQKGSSLGTEWQ and PSTLGASPAKPNSAPSGPSSAKL. Residues 14–33 show a composition bias toward polar residues; it reads ATSPGSNVIQKGSSLGTEWQ. Ser16 is subject to Phosphoserine. At Ser140 the chain carries Phosphoserine. Disordered regions lie at residues 226–279 and 435–472; these read KAPG…GEQS and KHSEEGKKQEERVKGRDKHINNLKKKCQKESEQNREKQ. The mediates interaction with NEK2 and is required for its function in the suppression of centrosome disjunction stretch occupies residues 256 to 432; sequence GLSKSLSSQV…QLIRESLKVT (177 aa). Coiled coils occupy residues 333–656 and 723–749; these read EHLL…RQAQ and DVIRRKLEEVQQLRHDIEDLRTSLSDR. A required for centrosome localization and for its function in the suppression of centrosome disjunction region spans residues 433 to 475; that stretch reads LQKHSEEGKKQEERVKGRDKHINNLKKKCQKESEQNREKQQRI. Basic and acidic residues-rich tracts occupy residues 435–454 and 462–472; these read KHSEEGKKQEERVKGRDKHI and QKESEQNREKQ.

Belongs to the CEP85 family. Homodimer. Interacts with STIL (via N-terminus); this interaction is essential for robust PLK4 activation and efficient centriole assembly and for PLK4-dependent cell migration. Interacts with PLK4; required for CEP85 to be able to drive centriole duplication and cell migration.

The protein localises to the cytoplasm. It is found in the cytoskeleton. Its subcellular location is the microtubule organizing center. The protein resides in the centrosome. It localises to the spindle pole. The protein localises to the nucleus. It is found in the nucleolus. Its subcellular location is the centriole. The protein resides in the cell cortex. Its function is as follows. Acts as a regulator of centriole duplication through a direct interaction with STIL, a key factor involved in the early steps of centriole formation. The CEP85-STIL protein complex acts as a modulator of PLK4-driven cytoskeletal rearrangements and directional cell motility. Acts as a negative regulator of NEK2 to maintain the centrosome integrity in interphase. Suppresses centrosome disjunction by inhibiting NEK2 kinase activity. This Mus musculus (Mouse) protein is Centrosomal protein of 85 kDa (Cep85).